A 179-amino-acid polypeptide reads, in one-letter code: Large ribosomal subunit protein uL5 (179 aa).

It belongs to the universal ribosomal protein uL5 family. In terms of assembly, part of the 50S ribosomal subunit; part of the 5S rRNA/L5/L18/L25 subcomplex. Contacts the 5S rRNA and the P site tRNA. Forms a bridge to the 30S subunit in the 70S ribosome.

This is one of the proteins that bind and probably mediate the attachment of the 5S RNA into the large ribosomal subunit, where it forms part of the central protuberance. In the 70S ribosome it contacts protein S13 of the 30S subunit (bridge B1b), connecting the 2 subunits; this bridge is implicated in subunit movement. Contacts the P site tRNA; the 5S rRNA and some of its associated proteins might help stabilize positioning of ribosome-bound tRNAs. The protein is Large ribosomal subunit protein uL5 of Maridesulfovibrio salexigens (strain ATCC 14822 / DSM 2638 / NCIMB 8403 / VKM B-1763) (Desulfovibrio salexigens).